The sequence spans 106 residues: Iron-sulfur cluster assembly protein CyaY (106 aa).

It belongs to the frataxin family.

Involved in iron-sulfur (Fe-S) cluster assembly. May act as a regulator of Fe-S biogenesis. The protein is Iron-sulfur cluster assembly protein CyaY of Citrobacter koseri (strain ATCC BAA-895 / CDC 4225-83 / SGSC4696).